A 205-amino-acid polypeptide reads, in one-letter code: MTSTRKSVLTSSSTITVTTCLLLVGLAAAGYASEGGEGAHHVDTAKQMKDFAWRCLDFAVLLAIVVWALKKANVKGSLAERQSNIEKMLKEAVEAKEQAEKKFLEYNEKLEQANKEIEAMSAAMKQEGELEKVRIIAEAKAAAEKVKEQAQQAAHQEILKARIELRDEAARLAVEIAEKKIKENITKNDQDKLVGDYISKVVTLH.

Residues 51-69 traverse the membrane as a helical segment; sequence FAWRCLDFAVLLAIVVWAL.

It belongs to the ATPase B chain family. F-type ATPases have 2 components, F(1) - the catalytic core - and F(0) - the membrane proton channel. F(1) has five subunits: alpha(3), beta(3), gamma(1), delta(1), epsilon(1). F(0) has three main subunits: a(1), b(2) and c(10-14). The alpha and beta chains form an alternating ring which encloses part of the gamma chain. F(1) is attached to F(0) by a central stalk formed by the gamma and epsilon chains, while a peripheral stalk is formed by the delta and b chains.

Its subcellular location is the cell inner membrane. Functionally, f(1)F(0) ATP synthase produces ATP from ADP in the presence of a proton or sodium gradient. F-type ATPases consist of two structural domains, F(1) containing the extramembraneous catalytic core and F(0) containing the membrane proton channel, linked together by a central stalk and a peripheral stalk. During catalysis, ATP synthesis in the catalytic domain of F(1) is coupled via a rotary mechanism of the central stalk subunits to proton translocation. In terms of biological role, component of the F(0) channel, it forms part of the peripheral stalk, linking F(1) to F(0). The polypeptide is ATP synthase subunit b (Geotalea uraniireducens (strain Rf4) (Geobacter uraniireducens)).